A 362-amino-acid chain; its full sequence is Patr class I histocompatibility antigen, B-2 alpha chain (362 aa).

An N-terminal signal peptide occupies residues 1-24 (MQVTAPRTVLLLLSAALALTETWA). Residues 25-114 (GSHSMKYFYT…LRGYYNQSEA (90 aa)) form an alpha-1 region. Topologically, residues 25–308 (GSHSMKYFYT…EPSSQSTIPI (284 aa)) are extracellular. Asn110 carries N-linked (GlcNAc...) asparagine glycosylation. The tract at residues 115–206 (GSHIIQRMYG…ENGKETLQRA (92 aa)) is alpha-2. 2 disulfides stabilise this stretch: Cys125–Cys188 and Cys227–Cys283. Residues 207-298 (DPPKTHVTHH…GLPKPLTLRW (92 aa)) form an alpha-3 region. One can recognise an Ig-like C1-type domain in the interval 209–295 (PKTHVTHHPI…QHEGLPKPLT (87 aa)). The segment at 299–308 (EPSSQSTIPI) is connecting peptide. Residues 309–332 (VGIVAGLAVLAVVVIGAVVAAVMC) form a helical membrane-spanning segment. Topologically, residues 333–362 (RRKSSGGKGGSYSQAASSDSAQGSDVSLTA) are cytoplasmic. Residues 336-362 (SSGGKGGSYSQAASSDSAQGSDVSLTA) form a disordered region. Residues 343-362 (SYSQAASSDSAQGSDVSLTA) show a composition bias toward low complexity.

It belongs to the MHC class I family. As to quaternary structure, heterodimer of an alpha chain and a beta chain (beta-2-microglobulin).

It localises to the membrane. In terms of biological role, involved in the presentation of foreign antigens to the immune system. In Pan troglodytes (Chimpanzee), this protein is Patr class I histocompatibility antigen, B-2 alpha chain.